A 118-amino-acid chain; its full sequence is Small ribosomal subunit protein uS13 (118 aa).

The segment at R92–R118 is disordered. Residues A106–R118 are compositionally biased toward basic residues.

The protein belongs to the universal ribosomal protein uS13 family. As to quaternary structure, part of the 30S ribosomal subunit. Forms a loose heterodimer with protein S19. Forms two bridges to the 50S subunit in the 70S ribosome.

Located at the top of the head of the 30S subunit, it contacts several helices of the 16S rRNA. In the 70S ribosome it contacts the 23S rRNA (bridge B1a) and protein L5 of the 50S subunit (bridge B1b), connecting the 2 subunits; these bridges are implicated in subunit movement. Contacts the tRNAs in the A and P-sites. This is Small ribosomal subunit protein uS13 from Psychrobacter arcticus (strain DSM 17307 / VKM B-2377 / 273-4).